The primary structure comprises 923 residues: Neuropilin-1 (923 aa).

Positions 1–21 (MERGLPLLCATLALALALAGA) are cleaved as a signal peptide. The Extracellular segment spans residues 22–856 (FRSDKCGGTI…PGNVLKTLDP (835 aa)). 3 disulfides stabilise this stretch: Cys-27–Cys-54, Cys-82–Cys-104, and Cys-147–Cys-173. CUB domains are found at residues 27–141 (CGGT…YEIF) and 147–265 (CSQN…YSVL). A glycan (N-linked (GlcNAc...) asparagine) is linked at Asn-150. 3 residues coordinate Ca(2+): Glu-195, Asp-209, and Asp-250. A disulfide bridge connects residues Cys-206 and Cys-228. Asn-261, Asn-300, and Asn-522 each carry an N-linked (GlcNAc...) asparagine glycan. 2 cysteine pairs are disulfide-bonded: Cys-275/Cys-424 and Cys-431/Cys-583. 2 F5/8 type C domains span residues 275-424 (CMEA…VYGC) and 431-583 (CSGM…LLGC). The O-linked (Xyl...) (chondroitin sulfate) serine; alternate glycan is linked to Ser-612. Ser-612 carries O-linked (Xyl...) (heparan sulfate) serine; alternate glycosylation. The region spanning 645 to 811 (TYGFNCEFGW…NHISQEDCAK (167 aa)) is the MAM domain. Residues 820-845 (TEIKIDETGSTPGYEGEGEGDKNISR) form a disordered region. O-linked (Xyl...) (chondroitin sulfate) serine glycosylation is present at Ser-829. An N-linked (GlcNAc...) asparagine glycan is attached at Asn-842. The helical transmembrane segment at 857 to 879 (ILITIIAMSALGVLLGAVCGVVL) threads the bilayer. At 880 to 923 (YCACWHNGMSERNLSALENYNFELVDGVKLKKDKLNPQSNYSEA) the chain is on the cytoplasmic side. Ser-894 is subject to Phosphoserine.

This sequence belongs to the neuropilin family. As to quaternary structure, homodimer, and heterodimer with NRP2. Binds PLXNB1. Interacts with FER. Interacts with VEGFA. Interacts with ABCB8/MITOSUR in mitochondria. As to expression, nervous system.

It localises to the mitochondrion membrane. The protein localises to the cell membrane. Its subcellular location is the cytoplasm. In terms of biological role, receptor involved in the development of the cardiovascular system, in angiogenesis, in the formation of certain neuronal circuits and in organogenesis outside the nervous system. Mediates the chemorepulsant activity of semaphorins. Recognizes a C-end rule (CendR) motif R/KXXR/K on its ligands which causes cellular internalization and vascular leakage. Binds to semaphorin 3A (SEMA3A), the PLGF-2 isoform of PGF, the VEGF165 isoform of VEGFA and VEGFB. Coexpression with KDR results in increased VEGF165 binding to KDR as well as increased chemotaxis. Regulates VEGF-induced angiogenesis. Binding to VEGFA initiates a signaling pathway needed for motor neuron axon guidance and cell body migration, including for the caudal migration of facial motor neurons from rhombomere 4 to rhombomere 6 during embryonic development. Regulates mitochondrial iron transport via interaction with ABCB8/MITOSUR. This Mus musculus (Mouse) protein is Neuropilin-1.